Consider the following 253-residue polypeptide: Testis-expressed protein 47 (253 aa).

The polypeptide is Testis-expressed protein 47 (Rattus norvegicus (Rat)).